Here is a 686-residue protein sequence, read N- to C-terminus: Pollen receptor-like kinase 5 (686 aa).

The N-terminal stretch at 1–39 (MRNWEDPFTLACNTALKKNLPSCIFIIIFISVLCPVAMS) is a signal peptide. The Extracellular segment spans residues 40 to 283 (QVVVPDSDAD…GKKAGSFYTL (244 aa)). Residue Asn-60 is glycosylated (N-linked (GlcNAc...) asparagine). LRR repeat units lie at residues 112-135 (MKNLRTISFMNNNFNGPMPQVKRF), 136-159 (TSLKSLYLSNNRFSGEIPADAFLG), 161-184 (PLLKKILLANNAFRGTIPSSLASL), 185-208 (PMLLELRLNGNQFQGQIPSFQQKD), and 210-230 (KLASFENNDLDGPIPESLRNM). Residues 284–304 (AIILIVIGIILVIIALVFCFV) form a helical membrane-spanning segment. Topologically, residues 305-686 (QSRRRNFLSA…DDDFGFSMNR (382 aa)) are cytoplasmic. Polar residues predominate over residues 328-339 (NYHQSTNKNNKP). A disordered region spans residues 328–355 (NYHQSTNKNNKPAESVNHTRRGSMPDPG). In terms of domain architecture, Protein kinase spans 375-648 (RASAEVLGSG…REVVEMVEML (274 aa)). At Ser-377 the chain carries Phosphoserine. ATP is bound by residues 381 to 389 (LGSGTFGAS) and Lys-403. Phosphoserine occurs at positions 455 and 458. Phosphothreonine is present on Thr-472. Position 542 is a phosphotyrosine (Tyr-542). Phosphoserine is present on Ser-545.

This sequence belongs to the protein kinase superfamily. Ser/Thr protein kinase family. In terms of assembly, interacts with the GRI peptide. Expressed in pollen and/or in flowers. Detected at low levels in leaves.

It is found in the cell membrane. The enzyme catalyses L-seryl-[protein] + ATP = O-phospho-L-seryl-[protein] + ADP + H(+). It carries out the reaction L-threonyl-[protein] + ATP = O-phospho-L-threonyl-[protein] + ADP + H(+). Receptor-like kinase involved in the control of pollen germination and pollen tube polar growth. The extracellular domain serves as a sensor for peptides derived from GRI. May act as a downstream element for ROS-dependent cell death induced by GRI. This is Pollen receptor-like kinase 5 from Arabidopsis thaliana (Mouse-ear cress).